We begin with the raw amino-acid sequence, 1802 residues long: Bromodomain and WD repeat-containing protein 3 (1802 aa).

WD repeat units lie at residues 170–209 (IKMH…IWAT), 213–251 (RLLA…VWCL), 255–297 (APVA…FWQW), 307–347 (RPVK…IYYL), 353–393 (EKIA…IWQY), 400–452 (SIVL…VWNS), 456–495 (QLLH…IWDL), and 502–542 (RNYF…LFGF). 2 positions are modified to phosphoserine: Ser693 and Ser703. The segment at 768-910 (KPSYTTQRND…PKQTRKKKGG (143 aa)) is disordered. The segment covering 785–795 (SLRRTQRKRQH) has biased composition (basic residues). A compositionally biased stretch (polar residues) spans 796–817 (TYQTRSNIEHNSQASCQNSGVQ). Residues 818–829 (EDSDSSSEEDET) show a composition bias toward acidic residues. The segment covering 846–859 (SESSSSDSSSEYSD) has biased composition (low complexity). Residues Ser885 and Ser886 each carry the phosphoserine modification. Basic and acidic residues predominate over residues 889–898 (ENLKSLEERQ). The span at 899 to 909 (KKPKQTRKKKG) shows a compositional bias: basic residues. The region spanning 1138-1245 (WGAHSRDEEC…DVLLRFIGDQ (108 aa)) is the Bromo 1 domain. Disordered stretches follow at residues 1262-1292 (RNST…VKCR), 1326-1361 (RQPA…LSED), 1438-1500 (IQSQ…SPVS), and 1520-1725 (SSSS…RAKR). Residues 1266-1278 (DAEEDTEIVDLDS) are compositionally biased toward acidic residues. In terms of domain architecture, Bromo 2 spans 1300–1430 (CNPDAWKKQC…ALFESHIKNI (131 aa)). Basic residues predominate over residues 1441–1453 (QKRRRPRYRKRLR). Low complexity predominate over residues 1454–1468 (SSSSSLSSSGAPSPK). Positions 1479 to 1499 (KNDQNTSVSHARTSSPFSSPV) are enriched in polar residues. Positions 1520 to 1533 (SSSSFGGYSRSGNS) are enriched in low complexity. 2 positions are modified to phosphoserine: Ser1577 and Ser1579. Basic and acidic residues predominate over residues 1587-1600 (GEDKEKKETKEKSH). Over residues 1601–1626 (LSTSESGELGSSLSSESTCGSDSDSE) the composition is skewed to low complexity. A compositionally biased stretch (basic and acidic residues) spans 1627-1643 (STSRTDQDYVDGDHDYS). Composition is skewed to basic residues over residues 1649–1666 (RPKR…RNWK) and 1684–1697 (RGGR…RGSR). Ser1763 carries the phosphoserine modification.

In terms of tissue distribution, found in most adult tissues. Down-regulated in a majority of the B-CLL cases examined.

Functionally, plays a role in the regulation of cell morphology and cytoskeletal organization. Required in the control of cell shape. The protein is Bromodomain and WD repeat-containing protein 3 (BRWD3) of Homo sapiens (Human).